We begin with the raw amino-acid sequence, 111 residues long: Urease subunit beta (111 aa).

It belongs to the urease beta subunit family. Heterotrimer of UreA (gamma), UreB (beta) and UreC (alpha) subunits. Three heterotrimers associate to form the active enzyme.

The protein localises to the cytoplasm. The enzyme catalyses urea + 2 H2O + H(+) = hydrogencarbonate + 2 NH4(+). It participates in nitrogen metabolism; urea degradation; CO(2) and NH(3) from urea (urease route): step 1/1. In Geobacillus kaustophilus (strain HTA426), this protein is Urease subunit beta.